Reading from the N-terminus, the 179-residue chain is MSRLQEFYKSKVVADLQAKFGYKCVMEVPRITKITLNMGVSEAVADKKVIEHAVSDLTKISGQKPVVTKTRKAIAGFKIRENYPIGCMVTLRGQRMYEFLDRLVAVALPRVRDFRGISGRAFDGRGNYNIGVKEQIIFPEIEYDKIDALRGLNISITTTAKTDDEAKALLTAFSFPFRN.

Belongs to the universal ribosomal protein uL5 family. Part of the 50S ribosomal subunit; part of the 5S rRNA/L5/L18/L25 subcomplex. Contacts the 5S rRNA and the P site tRNA. Forms a bridge to the 30S subunit in the 70S ribosome.

This is one of the proteins that bind and probably mediate the attachment of the 5S RNA into the large ribosomal subunit, where it forms part of the central protuberance. In the 70S ribosome it contacts protein S13 of the 30S subunit (bridge B1b), connecting the 2 subunits; this bridge is implicated in subunit movement. Contacts the P site tRNA; the 5S rRNA and some of its associated proteins might help stabilize positioning of ribosome-bound tRNAs. This Bordetella bronchiseptica (strain ATCC BAA-588 / NCTC 13252 / RB50) (Alcaligenes bronchisepticus) protein is Large ribosomal subunit protein uL5.